The following is a 260-amino-acid chain: D-threitol dehydrogenase (260 aa).

21-50 (LVTGAASGIGAAIASAYATKGARIAAVDLN) contacts NAD(+). The active-site Proton acceptor is tyrosine 166. Lysine 170 is a binding site for NAD(+).

It belongs to the short-chain dehydrogenases/reductases (SDR) family.

The enzyme catalyses D-threitol + NAD(+) = D-erythrulose + NADH + H(+). Its pathway is carbohydrate metabolism; D-threitol degradation. Its function is as follows. Catalyzes the NAD-dependent reversible oxidation of D-threitol. Involved in the degradation pathway of D-threitol, that allows M.smegmatis to grow on this compound as the sole carbon source. Does not catalyze the oxidation of xylitol, L-sorbitol, and L-sorbose. The sequence is that of D-threitol dehydrogenase from Mycolicibacterium smegmatis (strain ATCC 700084 / mc(2)155) (Mycobacterium smegmatis).